The following is a 149-amino-acid chain: Mediator of RNA polymerase II transcription subunit 9 (149 aa).

The disordered stretch occupies residues 18–64; that stretch reads TNPTLDKPNAEATKEEFSSAENRDEKDYLTNQQPKNLSTPSTSSNGE. Over residues 25–45 the composition is skewed to basic and acidic residues; it reads PNAEATKEEFSSAENRDEKDY. Residues 46–63 are compositionally biased toward polar residues; the sequence is LTNQQPKNLSTPSTSSNG. Short sequence motifs (nuclear localization signal) lie at residues 77-99 and 136-149; these read RKDP…HRLK and KRDV…KLQR.

Belongs to the Mediator complex subunit 9 family. Component of the Mediator complex, which is composed of at least 21 subunits that form three structurally distinct submodules. The Mediator head module contains MED6, MED8, MED11, SRB4/MED17, SRB5/MED18, ROX3/MED19, SRB2/MED20 and SRB6/MED22, the middle module contains MED1, MED4, NUT1/MED5, MED7, CSE2/MED9, NUT2/MED10, SRB7/MED21 and SOH1/MED31, and the tail module contains MED2, PGD1/MED3, RGR1/MED14, GAL11/MED15 and SIN4/MED16. The head and the middle modules interact directly with RNA polymerase II, whereas the elongated tail module interacts with gene-specific regulatory proteins. CSE2/MED9 interacts directly with MED4.

It localises to the nucleus. Functionally, component of the Mediator complex, a coactivator involved in the regulated transcription of nearly all RNA polymerase II-dependent genes. Mediator functions as a bridge to convey information from gene-specific regulatory proteins to the basal RNA polymerase II transcription machinery. The Mediator complex, having a compact conformation in its free form, is recruited to promoters by direct interactions with regulatory proteins and serves for the assembly of a functional preinitiation complex with RNA polymerase II and the general transcription factors. The Mediator complex unfolds to an extended conformation and partially surrounds RNA polymerase II, specifically interacting with the unphosphorylated form of the C-terminal domain (CTD) of RNA polymerase II. The Mediator complex dissociates from the RNA polymerase II holoenzyme and stays at the promoter when transcriptional elongation begins. The protein is Mediator of RNA polymerase II transcription subunit 9 (CSE2) of Saccharomyces cerevisiae (strain ATCC 204508 / S288c) (Baker's yeast).